A 505-amino-acid polypeptide reads, in one-letter code: Trans-cinnamate 4-monooxygenase C4H2 (505 aa).

2 short sequence motifs (nuclear localization signal) span residues Val-161 to Asn-168 and Glu-247 to Lys-254. Cys-447 contributes to the heme binding site.

It belongs to the cytochrome P450 family. The cofactor is heme.

The protein resides in the nucleus. The catalysed reaction is (E)-cinnamate + reduced [NADPH--hemoprotein reductase] + O2 = (E)-4-coumarate + oxidized [NADPH--hemoprotein reductase] + H2O + H(+). Its pathway is phenylpropanoid metabolism; trans-4-coumarate biosynthesis; trans-4-coumarate from trans-cinnamate: step 1/1. Its function is as follows. Component of the floral volatile benzenoid/phenylpropanoid (FVBP) biosynthetic pathway that controls carbon flux to pigments essential for pollination or UV protection, to numerous pytoalexins synthesized by plants when challenged by pathogens, and to lignins. The polypeptide is Trans-cinnamate 4-monooxygenase C4H2 (Petunia hybrida (Petunia)).